We begin with the raw amino-acid sequence, 237 residues long: Small ribosomal subunit protein uS2c (237 aa).

The protein belongs to the universal ribosomal protein uS2 family.

Its subcellular location is the plastid. In Epifagus virginiana (Beechdrops), this protein is Small ribosomal subunit protein uS2c (rps2).